The primary structure comprises 672 residues: MKQEQSHEGDSYSTEFINLFGKDTATHPSSNNGANNNGMGSTNSLDQFVATASSSSSLVTSSENRRPLIGDVTNRGNTNLYDHAVTPEILLEQLAYVDNFIPSLDNEFSNVDWNVNTTHNNANNNGADTFSSINANPFDLDEQLAIELSAFADDSFIFPDEDKPSNNNNNSNNGNDDHSNHDVLHEDPSTNNRQRNPHFLTQRRNTFLTSQYDQSKSRFSSKNKRNGNNGETNNFGDNMQNNHPFEPNFMGSPSQFPADATNMTSIDHGGFTNVDITSTENNTTGDNGVDALSNLLHRTTHTPNRSSPLSNVTSAQNSSSQQRKHSESKVDSNSDNNSSNKAPNITVPDYSIIPTSVLVTLLPRVNVPNGAYNSLISAGFDNDQIDAIAAIMAYHHQKKIRENNSNNNKNINTNDSQEAPILKNINELLSVLIPPSPAETRGPTTLSTSPSFNEHGVVAEASFLSSILELGIKHPKSNNIHNQRQPSRNDHKISRESDGNNGNDNVHHNNAVIKSSTTRGDEIAKIRSEPTLNASSSDHKENSLKRSHSGDLKNKKVPVDRKYSDNEDDEYDDADLHGFEKKQLIKKELGDDDEDLLIQSKKSHQKKKLKEKELESSIHELTEIAASLQKRIHTLETENKLLKNLVLSSGETEGIKKAESLKKQIFEKVQKE.

Over residues 1–10 (MKQEQSHEGD) the composition is skewed to basic and acidic residues. Positions 1 to 44 (MKQEQSHEGDSYSTEFINLFGKDTATHPSSNNGANNNGMGSTNS) are disordered. The segment covering 29–44 (SSNNGANNNGMGSTNS) has biased composition (low complexity). 3 short sequence motifs (9aaTAD) span residues 89–97 (ILLEQLAYV), 102–110 (PSLDNEFSN), and 109–117 (SNVDWNVNT). The transcriptional activation stretch occupies residues 95–144 (AYVDNFIPSLDNEFSNVDWNVNTTHNNANNNGADTFSSINANPFDLDEQL). 2 disordered regions span residues 157–265 (IFPD…NMTS) and 299–347 (TTHT…NITV). Residues 165-174 (SNNNNNSNNG) are compositionally biased toward low complexity. Residues 175 to 188 (NDDHSNHDVLHEDP) show a composition bias toward basic and acidic residues. Positions 188 to 235 (PSTNNRQRNPHFLTQRRNTFLTSQYDQSKSRFSSKNKRNGNNGETNNF) are inhibitory region; AdoMet responsiveness; required for interaction with MET30. A compositionally biased stretch (polar residues) spans 202–214 (QRRNTFLTSQYDQ). Residues 226–238 (NGNNGETNNFGDN) show a composition bias toward low complexity. 2 stretches are compositionally biased toward polar residues: residues 251 to 265 (GSPS…NMTS) and 301 to 321 (HTPN…SSSQ). Residues 312–375 (VTSAQNSSSQ…NVPNGAYNSL (64 aa)) form an auxiliary; required for high transcriptional activity under nonrepressive growth conditions region. Residues 375 to 403 (LISAGFDNDQIDAIAAIMAYHHQKKIREN) form a required for interaction with MET31 and MET32 region. Residue S416 is modified to Phosphoserine. Residues 475-574 (PKSNNIHNQR…DNEDDEYDDA (100 aa)) are disordered. The span at 477 to 486 (SNNIHNQRQP) shows a compositional bias: polar residues. Over residues 487-498 (SRNDHKISRESD) the composition is skewed to basic and acidic residues. The segment covering 499–512 (GNNGNDNVHHNNAV) has biased composition (low complexity). 2 stretches are compositionally biased toward basic and acidic residues: residues 519–528 (RGDEIAKIRS) and 537–565 (SDHK…KYSD). Residue S564 is modified to Phosphoserine. The bZIP domain maps to 586–649 (KKELGDDDED…KLLKNLVLSS (64 aa)). The basic motif stretch occupies residues 601-612 (KKSHQKKKLKEK). Residues 609-648 (LKEKELESSIHELTEIAASLQKRIHTLETENKLLKNLVLS) adopt a coiled-coil conformation. A leucine-zipper region spans residues 614 to 642 (LESSIHELTEIAASLQKRIHTLETENKLL).

It belongs to the bZIP family. Interacts with MET30. Tethered to DNA through two alternate complexes associating MET4 with MET28 and either MET31 or MET32. Interacts with MET28 and CBF1 through its leucine zipper to form a heteromeric complex.

Its subcellular location is the nucleus. Positive trans-acting factor capable of stimulating the transcription of the MET genes from the methionine biosynthetic pathway. MET4, MET28 and CBF1 are required for full induction of MET25 and MET16 gene transcription. MET4 controls as well the derepression of MET6. Required for the transcription of genes necessary for sulfur amino acid biosynthesis. Involved in the transcription activation of MET28 and MET30. Required for MET3 gene expression via assembly of the MET4-MET28-MET31 and MET4-MET28-MET32 complexes. Involved in response to cadmium and arsenic. Cadmium-activated MET4 also induces glutathione biosynthesis. In Saccharomyces cerevisiae (strain ATCC 204508 / S288c) (Baker's yeast), this protein is Transcriptional activator of sulfur metabolism MET4 (MET4).